The chain runs to 544 residues: MAAKQVIFGDDARAKIVNGVNILANAVKVTLGPKGRNVVLERSFGSPTVTKDGVSVAKEIELSDKLENMGAQLVKEVASKTNDNAGDGTTTATVLAQAIVREGFKYVAAGFNPTDLKRGIDKAVAEIVNEIKAIAKPTTTSKEIAQVGSISANSDADIGQIIADAMDKVGKEGVITVEDGSGLQNELDVVEGMQFDRGYLSPYFINNPERQIALLENPFVLLYDKKISNIRDLLPTLEQVAKAGRPLLIIAEDVEGEALATLVVNNIRGILKAVAVKAPGFGDRRKAMLEDIAILTGGTVIAEEVGLSLEKVTLENLGQAKRVEIGKENTTIIDGAGSENNIKVRIDQIKKQIEDATSDYDREKLQERVAKLAGGVAVIKVGAATETEMKEKKARVEDALHATRAAVEEGIVPGGGVALLRARSSIKELKGDNPDQDAGIKIVLRAIEEPLRQIVANAGDEPSVVVNKVLEGTGNYGYNASNGTYGDLVELGVLDPAKVTRSALQNAASVASLILTTDALVAELPKEEAAPAMPDAGGMGGMGF.

ATP is bound by residues 30–33, K51, 87–91, G415, and D495; these read TLGP and DGTTT.

This sequence belongs to the chaperonin (HSP60) family. Forms a cylinder of 14 subunits composed of two heptameric rings stacked back-to-back. Interacts with the co-chaperonin GroES.

It is found in the cytoplasm. The enzyme catalyses ATP + H2O + a folded polypeptide = ADP + phosphate + an unfolded polypeptide.. Together with its co-chaperonin GroES, plays an essential role in assisting protein folding. The GroEL-GroES system forms a nano-cage that allows encapsulation of the non-native substrate proteins and provides a physical environment optimized to promote and accelerate protein folding. The sequence is that of Chaperonin GroEL from Methylobacillus flagellatus (strain ATCC 51484 / DSM 6875 / VKM B-1610 / KT).